Reading from the N-terminus, the 466-residue chain is Glutamate--tRNA ligase (466 aa).

The 'HIGH' region signature appears at 11–21; sequence PSPTGFIHLGN. Positions 243-247 match the 'KMSKS' region motif; that stretch reads KMSKR. Lysine 246 is a binding site for ATP.

It belongs to the class-I aminoacyl-tRNA synthetase family. Glutamate--tRNA ligase type 1 subfamily. As to quaternary structure, monomer.

Its subcellular location is the cytoplasm. The enzyme catalyses tRNA(Glu) + L-glutamate + ATP = L-glutamyl-tRNA(Glu) + AMP + diphosphate. Catalyzes the attachment of glutamate to tRNA(Glu) in a two-step reaction: glutamate is first activated by ATP to form Glu-AMP and then transferred to the acceptor end of tRNA(Glu). The chain is Glutamate--tRNA ligase from Cupriavidus necator (strain ATCC 17699 / DSM 428 / KCTC 22496 / NCIMB 10442 / H16 / Stanier 337) (Ralstonia eutropha).